We begin with the raw amino-acid sequence, 186 residues long: Negative modulator of initiation of replication (186 aa).

The protein belongs to the SeqA family. In terms of assembly, homodimer. Polymerizes to form helical filaments.

It localises to the cytoplasm. In terms of biological role, negative regulator of replication initiation, which contributes to regulation of DNA replication and ensures that replication initiation occurs exactly once per chromosome per cell cycle. Binds to pairs of hemimethylated GATC sequences in the oriC region, thus preventing assembly of replication proteins and re-initiation at newly replicated origins. Repression is relieved when the region becomes fully methylated. The chain is Negative modulator of initiation of replication from Glaesserella parasuis serovar 5 (strain SH0165) (Haemophilus parasuis).